Here is a 2313-residue protein sequence, read N- to C-terminus: Protein Ycf2 (2313 aa).

Residue 1606–1613 participates in ATP binding; that stretch reads GSMETGRS.

It belongs to the Ycf2 family.

The protein localises to the plastid. Its subcellular location is the chloroplast stroma. Its function is as follows. Probable ATPase of unknown function. Its presence in a non-photosynthetic plant (Epifagus virginiana) and experiments in tobacco indicate that it has an essential function which is probably not related to photosynthesis. This is Protein Ycf2 from Psilotum nudum (Whisk fern).